Consider the following 102-residue polypeptide: Small ribosomal subunit protein uS10 (102 aa).

Belongs to the universal ribosomal protein uS10 family. As to quaternary structure, part of the 30S ribosomal subunit.

Involved in the binding of tRNA to the ribosomes. This chain is Small ribosomal subunit protein uS10, found in Arthrobacter sp. (strain FB24).